A 599-amino-acid chain; its full sequence is MTTPAPLTGLLPLNPEQLARLQAATTDLTPEQLAWVSGFFWGVLNPRSGAVAVTPAPDGKMPGVTLISASQTGNARRVAEALRDDLLAANLNVTLVNAGDYKFKQIASEKLLVIVTSTQGEGEPPEEAVALHKFLFSKKAPKLENTAFAVFSLGDTSYEFFCQSGKDFDSKLAELGGERLLDRVDADVEYQAAASEWRACVVDVLKSRAPVAVPSQSVATGAVNDIHTSPYTKDAPLTATLSVNQKITGRNSEKDVRHIEIDLGDSGLRYQPGDALGVWYQNDPALVKELVELLWLKGDEPVMVDGKTLPLAEALEWHFELTVNTANIVENYATLTRSESLLPLVGDKAQLQHYAATTPIVDMVRFSPAQLDAQALIDLLRPLTPRLYSIASAQAEVESEVHITVGVVRYDIEGRARAGGASSFLADRVEEEGEVRVFIEHNDNFRLPANPQTPVIMIGPGTGIAPFRAFMQQRAADGAEGKNWLFFGNPHFTEDFLYQVEWQRYVKEGLLSRIDLAWSRDQKEKIYVQDKLREQGAELWRWINDGAHIYVCGDARRMAADVEKALLEVIAEFGGMDLESADEYLSELRVERRYQRDVY.

A Flavodoxin-like domain is found at 64–202 (VTLISASQTG…AASEWRACVV (139 aa)). Residues 70–75 (SQTGNA), 117–120 (STQG), and 153–162 (LGDTSYEFFC) contribute to the FMN site. Residues 234 to 448 (DAPLTATLSV…IEHNDNFRLP (215 aa)) form the FAD-binding FR-type domain. FAD contacts are provided by residues Thr322, Ala356, 386–389 (RLYS), 404–406 (TVG), Tyr410, and 419–422 (GGAS). Residues 519-520 (SR), 525-529 (KIYVQ), and Asp561 each bind NADP(+). Tyr599 contacts FAD.

The protein belongs to the NADPH-dependent sulphite reductase flavoprotein subunit CysJ family. In the N-terminal section; belongs to the flavodoxin family. It in the C-terminal section; belongs to the flavoprotein pyridine nucleotide cytochrome reductase family. Alpha(8)-beta(8). The alpha component is a flavoprotein, the beta component is a hemoprotein. It depends on FAD as a cofactor. FMN is required as a cofactor.

It carries out the reaction hydrogen sulfide + 3 NADP(+) + 3 H2O = sulfite + 3 NADPH + 4 H(+). The protein operates within sulfur metabolism; hydrogen sulfide biosynthesis; hydrogen sulfide from sulfite (NADPH route): step 1/1. Functionally, component of the sulfite reductase complex that catalyzes the 6-electron reduction of sulfite to sulfide. This is one of several activities required for the biosynthesis of L-cysteine from sulfate. The flavoprotein component catalyzes the electron flow from NADPH -&gt; FAD -&gt; FMN to the hemoprotein component. In Salmonella typhi, this protein is Sulfite reductase [NADPH] flavoprotein alpha-component.